A 222-amino-acid chain; its full sequence is Beta-amylase (222 aa).

Residue Thr-36 coordinates substrate. Glu-74 serves as the catalytic Proton acceptor. Substrate-binding positions include 75–76 (NA) and Arg-114.

This sequence belongs to the glycosyl hydrolase 14 family.

The catalysed reaction is Hydrolysis of (1-&gt;4)-alpha-D-glucosidic linkages in polysaccharides so as to remove successive maltose units from the non-reducing ends of the chains.. The polypeptide is Beta-amylase (BMY1) (Secale cereale (Rye)).